A 1416-amino-acid chain; its full sequence is Tiny macrocysts protein B (1416 aa).

The next 8 helical transmembrane spans lie at 47–67, 93–113, 140–160, 185–205, 231–251, 253–273, 285–305, and 315–335; these read ILTI…GFKH, FGYL…ILGF, FVSF…LIGL, ANLP…IVAF, VTVL…DFVP, LTSI…IIVL, SGFY…MGIN, and ITIV…MFYF. Positions 356–372 are enriched in basic and acidic residues; sequence LKDANKKGKRNSVEKES. 2 disordered regions span residues 356-377 and 662-691; these read LKDA…PTSK and IEKS…RRGK. Transmembrane regions (helical) follow at residues 706–726 and 953–973; these read WLMI…LVVF and AILY…AVLF. Disordered stretches follow at residues 1018 to 1103 and 1119 to 1144; these read RDNL…RPLM and NVRL…ATRT. Residues 1024–1039 are compositionally biased toward acidic residues; the sequence is TTDDDGRDDHLGEDDN. Low complexity-rich tracts occupy residues 1048–1062 and 1083–1094; these read NNNN…NNNN and SSSGSNVLNTSS. The segment covering 1123-1144 has biased composition (basic and acidic residues); that stretch reads QAKDEEITNGGGERKGSDATRT. The next 3 membrane-spanning stretches (helical) occupy residues 1179–1199, 1325–1345, and 1358–1378; these read ILAT…TFTV, WFLA…FTYF, and VLTA…VVLF.

It localises to the membrane. Regulator of the cAMP signaling pathway specific to sexual development. Controls the levels of external cAMP by regulating the expression of phosphodiesterase pdsA and its inhibitor pdiA. The protein is Tiny macrocysts protein B (tmcB) of Dictyostelium discoideum (Social amoeba).